Here is a 161-residue protein sequence, read N- to C-terminus: Nucleotide-binding protein lpl1175 (161 aa).

The protein belongs to the YajQ family.

In terms of biological role, nucleotide-binding protein. The protein is Nucleotide-binding protein lpl1175 of Legionella pneumophila (strain Lens).